A 345-amino-acid polypeptide reads, in one-letter code: Aspartate-semialdehyde dehydrogenase (345 aa).

NADP(+) is bound by residues 11–14 and 39–40; these read TGQV and RS. Residue R99 participates in phosphate binding. The Acyl-thioester intermediate role is filled by C130. Q157 contacts substrate. 160-161 lines the NADP(+) pocket; the sequence is SG. K227 is a phosphate binding site. Substrate is bound at residue R249. H256 serves as the catalytic Proton acceptor. Residue N325 participates in NADP(+) binding.

The protein belongs to the aspartate-semialdehyde dehydrogenase family. Homodimer.

The enzyme catalyses L-aspartate 4-semialdehyde + phosphate + NADP(+) = 4-phospho-L-aspartate + NADPH + H(+). It participates in amino-acid biosynthesis; L-lysine biosynthesis via DAP pathway; (S)-tetrahydrodipicolinate from L-aspartate: step 2/4. It functions in the pathway amino-acid biosynthesis; L-methionine biosynthesis via de novo pathway; L-homoserine from L-aspartate: step 2/3. Its pathway is amino-acid biosynthesis; L-threonine biosynthesis; L-threonine from L-aspartate: step 2/5. Catalyzes the NADPH-dependent formation of L-aspartate-semialdehyde (L-ASA) by the reductive dephosphorylation of L-aspartyl-4-phosphate. This is Aspartate-semialdehyde dehydrogenase from Mycobacterium bovis (strain ATCC BAA-935 / AF2122/97).